The chain runs to 256 residues: Triosephosphate isomerase (256 aa).

9 to 11 is a binding site for substrate; sequence NWK. The Electrophile role is filled by His-94. Glu-166 acts as the Proton acceptor in catalysis. Residues Gly-172, Ser-211, and 232 to 233 contribute to the substrate site; that span reads GG.

Belongs to the triosephosphate isomerase family. Homodimer.

It localises to the cytoplasm. It carries out the reaction D-glyceraldehyde 3-phosphate = dihydroxyacetone phosphate. The protein operates within carbohydrate biosynthesis; gluconeogenesis. It participates in carbohydrate degradation; glycolysis; D-glyceraldehyde 3-phosphate from glycerone phosphate: step 1/1. Involved in the gluconeogenesis. Catalyzes stereospecifically the conversion of dihydroxyacetone phosphate (DHAP) to D-glyceraldehyde-3-phosphate (G3P). The polypeptide is Triosephosphate isomerase (Natranaerobius thermophilus (strain ATCC BAA-1301 / DSM 18059 / JW/NM-WN-LF)).